A 444-amino-acid chain; its full sequence is Putative zinc metalloprotease PD_0327 (444 aa).

H22 contacts Zn(2+). The active site involves E23. Zn(2+) is bound at residue H26. Residues 98 to 120 (IAIVAAGPLANLLLCMLLLWVLF) traverse the membrane as a helical segment. The 87-residue stretch at 192 to 278 (TLELSKLKQP…HPGMIEIRRG (87 aa)) folds into the PDZ domain. A run of 2 helical transmembrane segments spans residues 371–393 (VGWFIYFLSLLSLSLAIINLFPI) and 418–440 (AMAAGQYIGLALLAGLMGLAFYN).

It belongs to the peptidase M50B family. It depends on Zn(2+) as a cofactor.

The protein localises to the cell inner membrane. This is Putative zinc metalloprotease PD_0327 from Xylella fastidiosa (strain Temecula1 / ATCC 700964).